Consider the following 416-residue polypeptide: Adenylosuccinate synthetase (416 aa).

Residues 13–19 (GDEGKGK) and 41–43 (GHT) contribute to the GTP site. The active-site Proton acceptor is D14. 2 residues coordinate Mg(2+): D14 and G41. IMP-binding positions include 14–17 (DEGK), 39–42 (NAGH), T126, R140, Q220, T235, and R299. The active-site Proton donor is H42. 295–301 (TTTGRKR) provides a ligand contact to substrate. Residues R301, 327 to 329 (KLD), and 405 to 407 (STS) each bind GTP.

The protein belongs to the adenylosuccinate synthetase family. As to quaternary structure, homodimer. Mg(2+) serves as cofactor.

It is found in the cytoplasm. The enzyme catalyses IMP + L-aspartate + GTP = N(6)-(1,2-dicarboxyethyl)-AMP + GDP + phosphate + 2 H(+). Its pathway is purine metabolism; AMP biosynthesis via de novo pathway; AMP from IMP: step 1/2. Functionally, plays an important role in the de novo pathway of purine nucleotide biosynthesis. Catalyzes the first committed step in the biosynthesis of AMP from IMP. This is Adenylosuccinate synthetase from Campylobacter hominis (strain ATCC BAA-381 / DSM 21671 / CCUG 45161 / LMG 19568 / NCTC 13146 / CH001A).